Reading from the N-terminus, the 231-residue chain is Sugar fermentation stimulation protein homolog (231 aa).

The protein belongs to the SfsA family.

In Citrifermentans bemidjiense (strain ATCC BAA-1014 / DSM 16622 / JCM 12645 / Bem) (Geobacter bemidjiensis), this protein is Sugar fermentation stimulation protein homolog.